Consider the following 223-residue polypeptide: Cytidylate kinase (223 aa).

13-21 (GPSASGKGT) contacts ATP.

Belongs to the cytidylate kinase family. Type 1 subfamily.

The protein resides in the cytoplasm. The enzyme catalyses CMP + ATP = CDP + ADP. The catalysed reaction is dCMP + ATP = dCDP + ADP. The polypeptide is Cytidylate kinase (Nitrosomonas europaea (strain ATCC 19718 / CIP 103999 / KCTC 2705 / NBRC 14298)).